The following is a 919-amino-acid chain: Probable disease resistance protein At4g27220 (919 aa).

2 coiled-coil regions span residues 1–30 (MFRSNARALNRALERLKNVQTKVNEALKRS) and 74–95 (VEILEKVKRLEEQGQDLIKKIS). Residues 121–399 (MLDKLKDCLK…AEGLLDGQHH (279 aa)) enclose the NB-ARC domain. 141–148 (GMGGVGKT) is a binding site for ATP. LRR repeat units lie at residues 447–468 (GEGFHSLVMAGRGLIEFPQDKF), 469–492 (VSSVQRVSLMANKLERLPNNVIEG), 494–516 (ETLVLLLQGNSHVKEVPNGFLQA), 519–540 (NLRILDLSGVRIRTLPDSFSNL), 542–564 (SLRSLVLRNCKKLRNLPSLESLV), 565–587 (KLQFLDLHESAIRELPRGLEALS), 588–610 (SLRYICVSNTYQLQSIPAGTILQ), and 611–635 (LSSLEVLDMAGSAYSWGIKGEEREG).

Belongs to the disease resistance NB-LRR family.

Functionally, probable disease resistance protein. The chain is Probable disease resistance protein At4g27220 from Arabidopsis thaliana (Mouse-ear cress).